The sequence spans 578 residues: Membrane protein insertase YidC (578 aa).

A helical transmembrane segment spans residues 3-23 (IQRSILIVALAVVSYLLVLQW). The disordered stretch occupies residues 34-72 (AASASMNTTQGLPDTPSASGTSSDVPTAQSSAAGSEAAD). The span at 37-66 (ASMNTTQGLPDTPSASGTSSDVPTAQSSAA) shows a compositional bias: polar residues. The next 5 helical transmembrane spans lie at 361 to 381 (LELTVDYGFLWFIAQPIFWLL), 387 to 407 (LIGNWGWSIIALTVLIKLAFF), 457 to 477 (LGGCLPILVQMPVFLSLYWVL), 500 to 520 (PFFILPIVMGGTMLIQQMLNP), and 535 to 555 (PIIFTFFFLWFPAGLVLYWVV).

The protein belongs to the OXA1/ALB3/YidC family. Type 1 subfamily. In terms of assembly, interacts with the Sec translocase complex via SecD. Specifically interacts with transmembrane segments of nascent integral membrane proteins during membrane integration.

The protein resides in the cell inner membrane. Functionally, required for the insertion and/or proper folding and/or complex formation of integral membrane proteins into the membrane. Involved in integration of membrane proteins that insert both dependently and independently of the Sec translocase complex, as well as at least some lipoproteins. Aids folding of multispanning membrane proteins. In Pseudomonas aeruginosa (strain LESB58), this protein is Membrane protein insertase YidC.